Reading from the N-terminus, the 134-residue chain is Major capsid protein (134 aa).

In terms of assembly, homodimer.

The protein localises to the virion. Functionally, self-assembles to form a helical, filamentous nucleocapsid. The capsid proteins wrap around the DNA and maintain it in an A-form by non-specific desolvation and specific coordination of the DNA phosphate groups by positively charged residues. This certainly protects the viral DNA under conditions such as the extreme desiccation of its host. This is Major capsid protein from Saccharolobus solfataricus rod-shaped virus 1 (SSRV1).